The sequence spans 386 residues: Succinate--CoA ligase [ADP-forming] subunit beta (386 aa).

Residues 9 to 244 form the ATP-grasp domain; it reads KELLKQFGVP…LDEEDPAEIE (236 aa). Residues Lys46, 53 to 55, Glu99, Ala102, and Glu107 each bind ATP; that span reads GRG. 2 residues coordinate Mg(2+): Asn199 and Asp213. Substrate is bound by residues Asn264 and 321-323; that span reads GIM.

The protein belongs to the succinate/malate CoA ligase beta subunit family. In terms of assembly, heterotetramer of two alpha and two beta subunits. The cofactor is Mg(2+).

It carries out the reaction succinate + ATP + CoA = succinyl-CoA + ADP + phosphate. The enzyme catalyses GTP + succinate + CoA = succinyl-CoA + GDP + phosphate. It functions in the pathway carbohydrate metabolism; tricarboxylic acid cycle; succinate from succinyl-CoA (ligase route): step 1/1. Functionally, succinyl-CoA synthetase functions in the citric acid cycle (TCA), coupling the hydrolysis of succinyl-CoA to the synthesis of either ATP or GTP and thus represents the only step of substrate-level phosphorylation in the TCA. The beta subunit provides nucleotide specificity of the enzyme and binds the substrate succinate, while the binding sites for coenzyme A and phosphate are found in the alpha subunit. The polypeptide is Succinate--CoA ligase [ADP-forming] subunit beta (Bordetella petrii (strain ATCC BAA-461 / DSM 12804 / CCUG 43448)).